A 399-amino-acid polypeptide reads, in one-letter code: MTKKRHLFTSESVTEGHPDKICDQISDSILDAILSKDANARVACETTVTTGLVLVAGEITTSTYVDIPKIVRETIQGIGYTRAKYGFDAETCAVLTSIDEQSADIAMGVDQALEAREGQMTDAEIEAIGAGDQGLMFGFACNETQELMPLPISLAHKLARRLTEVRKDDTLSYLRPDGKTQVTVEYDENGKPVRVDTIVISTQHHPDVTWEEIDRDLKEHVIKAVVPAELIDGETKFFINPTGRFVIGGPQGDAGLTGRKIIVDTYGGYARHGGGAFSGKDATKVDRSAAYAARYVAKNIVAAGLAEKAEVQLAYAIGVAQPVSISVDTFGTGKVSEDVLVELVRNNFDLRPAGIIKMLDLRRPIYKQTAAYGHFGRTDVDLSWERTDKAAALKEQAGL.

Histidine 17 is a binding site for ATP. Residue aspartate 19 coordinates Mg(2+). Residue glutamate 45 coordinates K(+). Positions 58 and 101 each coordinate L-methionine. Positions 101–111 (QSADIAMGVDQ) are flexible loop. ATP contacts are provided by residues 177-179 (DGK), 244-245 (RF), aspartate 253, 259-260 (RK), alanine 276, and lysine 280. L-methionine is bound at residue aspartate 253. An L-methionine-binding site is contributed by lysine 284.

This sequence belongs to the AdoMet synthase family. In terms of assembly, homotetramer; dimer of dimers. Requires Mg(2+) as cofactor. K(+) is required as a cofactor.

The protein resides in the cytoplasm. The catalysed reaction is L-methionine + ATP + H2O = S-adenosyl-L-methionine + phosphate + diphosphate. It participates in amino-acid biosynthesis; S-adenosyl-L-methionine biosynthesis; S-adenosyl-L-methionine from L-methionine: step 1/1. Its function is as follows. Catalyzes the formation of S-adenosylmethionine (AdoMet) from methionine and ATP. The overall synthetic reaction is composed of two sequential steps, AdoMet formation and the subsequent tripolyphosphate hydrolysis which occurs prior to release of AdoMet from the enzyme. The protein is S-adenosylmethionine synthase of Bacillus cereus (strain ATCC 10987 / NRS 248).